Reading from the N-terminus, the 374-residue chain is Growth/differentiation factor 8 (374 aa).

The signal sequence occupies residues 1–22; the sequence is MHFTQVLISLSVLIACGPVGYG. Residues 23-265 constitute a propeptide that is removed on maturation; it reads DITAHQQPST…ISEGPKRIRR (243 aa). N-linked (GlcNAc...) asparagine glycosylation is found at Asn-72 and Asn-274. 4 cysteine pairs are disulfide-bonded: Cys-271–Cys-281, Cys-280–Cys-339, Cys-308–Cys-371, and Cys-312–Cys-373.

This sequence belongs to the TGF-beta family. Homodimer; disulfide-linked. Predominantly expressed in muscle. At hatching, expression is strongest in the skin epithelium, and is also found in the retina and brain. From day 28, expressed in skeletal muscle. In the adult, highest expression is seen in the gastrointestinal tract, brain, muscle, heart and testis. Also expressed in the adult pharynx, kidney, spleen, liver, gill, eyes, skin, swim bladder and ovary.

It localises to the secreted. Acts specifically as a negative regulator of skeletal muscle growth. May down-regulate muscle-specific transcription factors such as myod and myog. The protein is Growth/differentiation factor 8 (mstnb) of Danio rerio (Zebrafish).